The chain runs to 319 residues: NADH-quinone oxidoreductase subunit H 2 (319 aa).

A run of 9 helical transmembrane segments spans residues 1–21, 77–97, 107–127, 147–167, 179–199, 214–234, 238–258, 262–282, and 293–313; these read MIGMIITATISVALIMVLLVL, ILAPAVAATPVLAGFGVVAIG, VGLLFLLGMLGLTAYAAVLGA, LAYEVFLGLSLMGVVMIAGSF, VWFVVLQPLGMALFTIAGIAA, LIAGFITEYTGMSFGLFFLGE, VLLVSALAVTLFFGGWLGPWL, VWFGLKTAVIAVAFVWIRATL, and FAWKVALPLSLLNLMLTGIVV.

Belongs to the complex I subunit 1 family. In terms of assembly, NDH-1 is composed of 14 different subunits. Subunits NuoA, H, J, K, L, M, N constitute the membrane sector of the complex.

It is found in the cell inner membrane. The catalysed reaction is a quinone + NADH + 5 H(+)(in) = a quinol + NAD(+) + 4 H(+)(out). Functionally, NDH-1 shuttles electrons from NADH, via FMN and iron-sulfur (Fe-S) centers, to quinones in the respiratory chain. The immediate electron acceptor for the enzyme in this species is believed to be ubiquinone. Couples the redox reaction to proton translocation (for every two electrons transferred, four hydrogen ions are translocated across the cytoplasmic membrane), and thus conserves the redox energy in a proton gradient. This subunit may bind ubiquinone. This chain is NADH-quinone oxidoreductase subunit H 2, found in Rhodopseudomonas palustris (strain ATCC BAA-98 / CGA009).